We begin with the raw amino-acid sequence, 668 residues long: DNA ligase (668 aa).

Residues 34–38 (DAEYD), 83–84 (SL), and Glu113 each bind NAD(+). The N6-AMP-lysine intermediate role is filled by Lys115. 4 residues coordinate NAD(+): Arg136, Glu170, Lys286, and Lys310. Residues Cys404, Cys407, Cys422, and Cys427 each contribute to the Zn(2+) site. Residues 590–668 (DSDSYFAGKT…EEQLMGELKK (79 aa)) enclose the BRCT domain.

The protein belongs to the NAD-dependent DNA ligase family. LigA subfamily. The cofactor is Mg(2+). Mn(2+) is required as a cofactor.

It carries out the reaction NAD(+) + (deoxyribonucleotide)n-3'-hydroxyl + 5'-phospho-(deoxyribonucleotide)m = (deoxyribonucleotide)n+m + AMP + beta-nicotinamide D-nucleotide.. Functionally, DNA ligase that catalyzes the formation of phosphodiester linkages between 5'-phosphoryl and 3'-hydroxyl groups in double-stranded DNA using NAD as a coenzyme and as the energy source for the reaction. It is essential for DNA replication and repair of damaged DNA. The polypeptide is DNA ligase (Bacillus subtilis (strain 168)).